The following is a 450-amino-acid chain: Probable ECA polymerase (450 aa).

Helical transmembrane passes span 6-26, 37-57, 63-83, 118-138, 155-175, 181-201, 207-227, 228-248, 341-361, 378-398, and 410-430; these read FSGL…LTWF, VFFS…TSVL, VGVA…CFYA, VILM…NGFL, GVAL…VYFL, AWLF…MIVG, IIIA…ISLW, MLAA…LKRY, LVVM…GLII, YKAA…IVLA, and VFFI…YWLF.

Belongs to the WzyE family. In terms of assembly, probably part of a complex composed of WzxE, WzyE and WzzE.

It is found in the cell inner membrane. Its pathway is bacterial outer membrane biogenesis; enterobacterial common antigen biosynthesis. Its function is as follows. Probably involved in the polymerization of enterobacterial common antigen (ECA) trisaccharide repeat units. The protein is Probable ECA polymerase of Escherichia fergusonii (strain ATCC 35469 / DSM 13698 / CCUG 18766 / IAM 14443 / JCM 21226 / LMG 7866 / NBRC 102419 / NCTC 12128 / CDC 0568-73).